Here is a 162-residue protein sequence, read N- to C-terminus: MTLGDTLFTLVTFLVLMLAVGKVAWKPVSKMMADRQQKISGDLDYAEKSRKDADALAAKRQEELQHSQADAVKIVNQAKENGEKQRQSLVDAANAEVTTMKKNAQTDIDQARKDALASAKNDVADLSLTIAQKLIGKELNADDQKGLIDDYIKRLGDANGSH.

Residues 6–25 form a helical membrane-spanning segment; that stretch reads TLFTLVTFLVLMLAVGKVAW.

The protein belongs to the ATPase B chain family. F-type ATPases have 2 components, F(1) - the catalytic core - and F(0) - the membrane proton channel. F(1) has five subunits: alpha(3), beta(3), gamma(1), delta(1), epsilon(1). F(0) has three main subunits: a(1), b(2) and c(10-14). The alpha and beta chains form an alternating ring which encloses part of the gamma chain. F(1) is attached to F(0) by a central stalk formed by the gamma and epsilon chains, while a peripheral stalk is formed by the delta and b chains.

It is found in the cell membrane. Functionally, f(1)F(0) ATP synthase produces ATP from ADP in the presence of a proton or sodium gradient. F-type ATPases consist of two structural domains, F(1) containing the extramembraneous catalytic core and F(0) containing the membrane proton channel, linked together by a central stalk and a peripheral stalk. During catalysis, ATP synthesis in the catalytic domain of F(1) is coupled via a rotary mechanism of the central stalk subunits to proton translocation. In terms of biological role, component of the F(0) channel, it forms part of the peripheral stalk, linking F(1) to F(0). This is ATP synthase subunit b from Lacticaseibacillus casei (strain BL23) (Lactobacillus casei).